The primary structure comprises 107 residues: Protein beta (107 aa).

The chain is Protein beta (beta) from Bovine ephemeral fever virus (strain BB7721) (BEFV).